An 86-amino-acid polypeptide reads, in one-letter code: Cell division topological specificity factor (86 aa).

It belongs to the MinE family.

In terms of biological role, prevents the cell division inhibition by proteins MinC and MinD at internal division sites while permitting inhibition at polar sites. This ensures cell division at the proper site by restricting the formation of a division septum at the midpoint of the long axis of the cell. This Shewanella sediminis (strain HAW-EB3) protein is Cell division topological specificity factor.